The following is a 68-amino-acid chain: Conotoxin ArMMSK-01 (68 aa).

A signal peptide spans 1–20 (MMSKLGVLLTICMLLFPLTA). The propeptide occupies 21–51 (LPLDGDQPADRPAERMQDDFISEQHPLFNPI). Intrachain disulfides connect C54/C67, C55/C63, and C59/C66. The residue at position 65 (P65) is a 4-hydroxyproline.

It belongs to the conotoxin M superfamily. In terms of tissue distribution, expressed by the venom duct.

The protein resides in the secreted. The protein is Conotoxin ArMMSK-01 of Conus arenatus (Sand-dusted cone).